The sequence spans 158 residues: Ribonuclease H (158 aa).

An RNase H type-1 domain is found at 9–155; it reads AFKPVELYTD…CDKLAVAAYQ (147 aa). Mg(2+)-binding residues include aspartate 18, glutamate 58, aspartate 80, and aspartate 147.

The protein belongs to the RNase H family. In terms of assembly, monomer. Mg(2+) serves as cofactor.

It is found in the cytoplasm. The catalysed reaction is Endonucleolytic cleavage to 5'-phosphomonoester.. Functionally, endonuclease that specifically degrades the RNA of RNA-DNA hybrids. The polypeptide is Ribonuclease H (Rhodopirellula baltica (strain DSM 10527 / NCIMB 13988 / SH1)).